A 534-amino-acid chain; its full sequence is Nuclear polyadenylated RNA-binding protein 4 (534 aa).

A disordered region spans residues 1–154; the sequence is MSSDEEDFND…TKEERSKADL (154 aa). 2 positions are modified to phosphoserine: S2 and S3. Positions 13–30 are enriched in basic and acidic residues; that stretch reads GDDKPTTTEEVKKEEEQN. A compositionally biased stretch (low complexity) spans 37–78; the sequence is SQLDQLAALQALSSSLNKLNNPNSNNSSSNNSNQDTSSSKQD. S51 and S87 each carry phosphoserine. Basic and acidic residues predominate over residues 81 to 98; that stretch reads ANDKEGSNEDTKNEKKQE. Low complexity-rich tracts occupy residues 99–112 and 121–144; these read SATS…ASSA and QLQQ…QVTQ. Residues 145–154 show a composition bias toward basic and acidic residues; the sequence is TKEERSKADL. RRM domains lie at 159-241 and 243-320; these read CKMF…EQDK and GKIF…RAEP. Residue S206 is modified to Phosphoserine. Disordered stretches follow at residues 316-354 and 415-534; these read KRAE…DFNQ and MPPN…PYNR. The span at 336 to 354 shows a compositional bias: low complexity; sequence GNNMNRRGGNFGNQGDFNQ. The segment covering 420–459 has biased composition (polar residues); sequence MTLNQPQQDSNATQGSPAPSDSDNNKSNDVQTIGNTSNTD. A Phosphothreonine modification is found at T458. Phosphoserine is present on residues S460 and S462. Low complexity predominate over residues 460-475; it reads SGSPPLNLPNGPKGPS. Over residues 478 to 505 the composition is skewed to basic and acidic residues; that stretch reads NDDHNSGYGYNRDRGDRDRNDRDRDYNH. Position 519 is an omega-N-methylarginine (R519). The segment covering 523–534 has biased composition (low complexity); it reads NRRNNGYHPYNR.

In terms of assembly, interacts with NAM7. In terms of processing, methylated by HMT1. The methylation is required for nuclear export.

It localises to the cytoplasm. The protein localises to the nucleus. It is found in the stress granule. Its function is as follows. RNA-binding protein, which is involved in the polyadenylation-dependent pre-mRNA 3'-end formation and cooperates with the cleavage factor CFIA complex and the cleavage and polyadenylation factor (CPF) complex. May be involved in regulation of poly(A) site selection. Is involved in nonsense-mediated mRNA decay. Seems to bind to an RNA downstream sequence element (DSE) located 3' of a nonsense codon and may mark the transcript for decay. The protein is Nuclear polyadenylated RNA-binding protein 4 of Saccharomyces cerevisiae (strain ATCC 204508 / S288c) (Baker's yeast).